The following is a 981-amino-acid chain: Beta-glucuronidase (981 aa).

The active-site Nucleophile is the glutamate 500. Positions 561, 562, 563, 581, and 583 each coordinate Mg(2+).

Belongs to the glycosyl hydrolase 2 family.

The protein localises to the periplasm. It catalyses the reaction a beta-D-glucuronoside + H2O = D-glucuronate + an alcohol. Functionally, beta-glucuronidase involved in ulvan degradation. Ulvan is the main polysaccharide component of the Ulvales (green seaweed) cell wall. It is composed of disaccharide building blocks comprising 3-sulfated rhamnose (Rha3S) linked to D-glucuronic acid (GlcA), L-iduronic acid (IduA), or D-xylose (Xyl). Beta-glucuronidase removes GlcA side chains present on some O2 residues of Rha3S. Can remove the GlcA side chains from polymeric ulvan or from smaller oligomers. This is Beta-glucuronidase from Formosa agariphila (strain DSM 15362 / KCTC 12365 / LMG 23005 / KMM 3901 / M-2Alg 35-1).